The chain runs to 201 residues: dITP/XTP pyrophosphatase (201 aa).

9 to 14 (TRNSGK) contacts substrate. Glu-42 and Asp-71 together coordinate Mg(2+). Asp-71 (proton acceptor) is an active-site residue. Residues Ser-72, 156–159 (FGYD), Lys-178, and 183–184 (HR) each bind substrate.

It belongs to the HAM1 NTPase family. In terms of assembly, homodimer. It depends on Mg(2+) as a cofactor.

It carries out the reaction XTP + H2O = XMP + diphosphate + H(+). It catalyses the reaction dITP + H2O = dIMP + diphosphate + H(+). The catalysed reaction is ITP + H2O = IMP + diphosphate + H(+). Pyrophosphatase that catalyzes the hydrolysis of nucleoside triphosphates to their monophosphate derivatives, with a high preference for the non-canonical purine nucleotides XTP (xanthosine triphosphate), dITP (deoxyinosine triphosphate) and ITP. Seems to function as a house-cleaning enzyme that removes non-canonical purine nucleotides from the nucleotide pool, thus preventing their incorporation into DNA/RNA and avoiding chromosomal lesions. The chain is dITP/XTP pyrophosphatase (ynbD) from Lactococcus lactis subsp. lactis (strain IL1403) (Streptococcus lactis).